We begin with the raw amino-acid sequence, 297 residues long: Nucleotide-binding protein BMA10229_A1510 (297 aa).

8-15 (GISGSGKS) serves as a coordination point for ATP. 57–60 (DARS) lines the GTP pocket.

It belongs to the RapZ-like family.

Its function is as follows. Displays ATPase and GTPase activities. This chain is Nucleotide-binding protein BMA10229_A1510, found in Burkholderia mallei (strain NCTC 10229).